The primary structure comprises 246 residues: MSQIESQNPEPVFQLKGSMLAITVMELARTNLEALDRQLAAKVAQAPNFFSNTPLILALDKLAPNEGPVDLPGLVRICRQHGLRTLAIRANRIEDIAAAIAVDLPVLPPSGARERVIDPIEVEAPKKIPEKPPEPLIKPTRVITAPVRGGQQIYAQGGDLVVVAPVSPGAELLADGNIHVYGPMRGRALAGIKGDTKARIFCQQLSAELISIAGQYKVSEDLRRDPLWGSPVQVSLSGDVLNIIRL.

Belongs to the MinC family. In terms of assembly, interacts with MinD and FtsZ.

In terms of biological role, cell division inhibitor that blocks the formation of polar Z ring septums. Rapidly oscillates between the poles of the cell to destabilize FtsZ filaments that have formed before they mature into polar Z rings. Prevents FtsZ polymerization. In Pseudomonas savastanoi pv. phaseolicola (strain 1448A / Race 6) (Pseudomonas syringae pv. phaseolicola (strain 1448A / Race 6)), this protein is Probable septum site-determining protein MinC.